The following is a 174-amino-acid chain: Ribosome maturation factor RimM (174 aa).

The PRC barrel domain maps to 97–173 (GNKFYFHEVI…DLPVGLVEMY (77 aa)).

The protein belongs to the RimM family. Binds ribosomal protein uS19.

It localises to the cytoplasm. In terms of biological role, an accessory protein needed during the final step in the assembly of 30S ribosomal subunit, possibly for assembly of the head region. Essential for efficient processing of 16S rRNA. May be needed both before and after RbfA during the maturation of 16S rRNA. It has affinity for free ribosomal 30S subunits but not for 70S ribosomes. This chain is Ribosome maturation factor RimM, found in Flavobacterium johnsoniae (strain ATCC 17061 / DSM 2064 / JCM 8514 / BCRC 14874 / CCUG 350202 / NBRC 14942 / NCIMB 11054 / UW101) (Cytophaga johnsonae).